A 610-amino-acid polypeptide reads, in one-letter code: Elongation factor 4 (610 aa).

The 183-residue stretch at 15-197 (KSIRNFSIIA…RIINDIPYPK (183 aa)) folds into the tr-type G domain. GTP-binding positions include 27 to 32 (DHGKST) and 144 to 147 (NKID).

Belongs to the TRAFAC class translation factor GTPase superfamily. Classic translation factor GTPase family. LepA subfamily.

It is found in the cell membrane. It carries out the reaction GTP + H2O = GDP + phosphate + H(+). Functionally, required for accurate and efficient protein synthesis under certain stress conditions. May act as a fidelity factor of the translation reaction, by catalyzing a one-codon backward translocation of tRNAs on improperly translocated ribosomes. Back-translocation proceeds from a post-translocation (POST) complex to a pre-translocation (PRE) complex, thus giving elongation factor G a second chance to translocate the tRNAs correctly. Binds to ribosomes in a GTP-dependent manner. The polypeptide is Elongation factor 4 (Buchnera aphidicola subsp. Acyrthosiphon pisum (strain APS) (Acyrthosiphon pisum symbiotic bacterium)).